Reading from the N-terminus, the 178-residue chain is MNKKTQALIEQYSKSLVEVAIEHKIVEKIQQEVAALIDIFETSELEGVLSSLAVSHDEKQHFVKTLQTSCSTYLVNFLEVIVQNEREALLYPILKSIDQELIKVNGQYPIQITTAVALSPEQKERLFDIAKTKLALPNGQLVEHIDPSIVGGFVVNANNKVIDASVRNQLHQFKMKLK.

The protein belongs to the ATPase delta chain family. In terms of assembly, F-type ATPases have 2 components, F(1) - the catalytic core - and F(0) - the membrane proton channel. F(1) has five subunits: alpha(3), beta(3), gamma(1), delta(1), epsilon(1). F(0) has three main subunits: a(1), b(2) and c(10-14). The alpha and beta chains form an alternating ring which encloses part of the gamma chain. F(1) is attached to F(0) by a central stalk formed by the gamma and epsilon chains, while a peripheral stalk is formed by the delta and b chains.

The protein resides in the cell membrane. In terms of biological role, f(1)F(0) ATP synthase produces ATP from ADP in the presence of a proton or sodium gradient. F-type ATPases consist of two structural domains, F(1) containing the extramembraneous catalytic core and F(0) containing the membrane proton channel, linked together by a central stalk and a peripheral stalk. During catalysis, ATP synthesis in the catalytic domain of F(1) is coupled via a rotary mechanism of the central stalk subunits to proton translocation. This protein is part of the stalk that links CF(0) to CF(1). It either transmits conformational changes from CF(0) to CF(1) or is implicated in proton conduction. The protein is ATP synthase subunit delta of Streptococcus agalactiae serotype Ia (strain ATCC 27591 / A909 / CDC SS700).